An 871-amino-acid polypeptide reads, in one-letter code: DNA mismatch repair protein MutS (871 aa).

Position 617 to 624 (G617 to S624) interacts with ATP.

Belongs to the DNA mismatch repair MutS family.

Its function is as follows. This protein is involved in the repair of mismatches in DNA. It is possible that it carries out the mismatch recognition step. This protein has a weak ATPase activity. The sequence is that of DNA mismatch repair protein MutS from Hydrogenovibrio crunogenus (strain DSM 25203 / XCL-2) (Thiomicrospira crunogena).